A 469-amino-acid chain; its full sequence is ATP synthase subunit beta (469 aa).

155 to 162 (GGAGVGKT) serves as a coordination point for ATP.

This sequence belongs to the ATPase alpha/beta chains family. F-type ATPases have 2 components, CF(1) - the catalytic core - and CF(0) - the membrane proton channel. CF(1) has five subunits: alpha(3), beta(3), gamma(1), delta(1), epsilon(1). CF(0) has three main subunits: a(1), b(2) and c(9-12). The alpha and beta chains form an alternating ring which encloses part of the gamma chain. CF(1) is attached to CF(0) by a central stalk formed by the gamma and epsilon chains, while a peripheral stalk is formed by the delta and b chains.

It is found in the cell inner membrane. The enzyme catalyses ATP + H2O + 4 H(+)(in) = ADP + phosphate + 5 H(+)(out). Functionally, produces ATP from ADP in the presence of a proton gradient across the membrane. The catalytic sites are hosted primarily by the beta subunits. This chain is ATP synthase subunit beta, found in Helicobacter pylori (strain P12).